The following is a 150-amino-acid chain: Arginine repressor (150 aa).

Belongs to the ArgR family.

It is found in the cytoplasm. It participates in amino-acid biosynthesis; L-arginine biosynthesis [regulation]. Its function is as follows. Regulates arginine biosynthesis genes. In Clostridium botulinum (strain ATCC 19397 / Type A), this protein is Arginine repressor.